The chain runs to 482 residues: Bifunctional protein GlmU (482 aa).

Positions 1 to 238 are pyrophosphorylase; the sequence is MSAIRPAAVV…HREIAGINNR (238 aa). Residues 12–15, lysine 26, glutamine 79, and 84–85 each bind UDP-N-acetyl-alpha-D-glucosamine; these read LAAG and GT. Residue aspartate 110 coordinates Mg(2+). Residues glycine 147, glutamate 163, asparagine 178, and asparagine 236 each coordinate UDP-N-acetyl-alpha-D-glucosamine. Position 236 (asparagine 236) interacts with Mg(2+). The linker stretch occupies residues 239-259; sequence VQLAEARRILNDRLLTRAMLA. The interval 260–482 is N-acetyltransferase; sequence GVTVVDPATT…VASRKPEGED (223 aa). Positions 341 and 359 each coordinate UDP-N-acetyl-alpha-D-glucosamine. Catalysis depends on histidine 371, which acts as the Proton acceptor. UDP-N-acetyl-alpha-D-glucosamine is bound by residues tyrosine 374 and asparagine 385. Residues alanine 388, 394 to 395, serine 413, alanine 431, and arginine 448 each bind acetyl-CoA; that span reads NY.

This sequence in the N-terminal section; belongs to the N-acetylglucosamine-1-phosphate uridyltransferase family. The protein in the C-terminal section; belongs to the transferase hexapeptide repeat family. In terms of assembly, homotrimer. The cofactor is Mg(2+).

It is found in the cytoplasm. The enzyme catalyses alpha-D-glucosamine 1-phosphate + acetyl-CoA = N-acetyl-alpha-D-glucosamine 1-phosphate + CoA + H(+). It carries out the reaction N-acetyl-alpha-D-glucosamine 1-phosphate + UTP + H(+) = UDP-N-acetyl-alpha-D-glucosamine + diphosphate. It participates in nucleotide-sugar biosynthesis; UDP-N-acetyl-alpha-D-glucosamine biosynthesis; N-acetyl-alpha-D-glucosamine 1-phosphate from alpha-D-glucosamine 6-phosphate (route II): step 2/2. It functions in the pathway nucleotide-sugar biosynthesis; UDP-N-acetyl-alpha-D-glucosamine biosynthesis; UDP-N-acetyl-alpha-D-glucosamine from N-acetyl-alpha-D-glucosamine 1-phosphate: step 1/1. The protein operates within bacterial outer membrane biogenesis; LPS lipid A biosynthesis. In terms of biological role, catalyzes the last two sequential reactions in the de novo biosynthetic pathway for UDP-N-acetylglucosamine (UDP-GlcNAc). The C-terminal domain catalyzes the transfer of acetyl group from acetyl coenzyme A to glucosamine-1-phosphate (GlcN-1-P) to produce N-acetylglucosamine-1-phosphate (GlcNAc-1-P), which is converted into UDP-GlcNAc by the transfer of uridine 5-monophosphate (from uridine 5-triphosphate), a reaction catalyzed by the N-terminal domain. This Streptomyces avermitilis (strain ATCC 31267 / DSM 46492 / JCM 5070 / NBRC 14893 / NCIMB 12804 / NRRL 8165 / MA-4680) protein is Bifunctional protein GlmU.